Consider the following 23-residue polypeptide: Cysteine proteinase (23 aa).

Over residues 1–10 (ADSLDWREKG) the composition is skewed to basic and acidic residues. The tract at residues 1 to 23 (ADSLDWREKGVVNSIKDQAQXGS) is disordered.

This sequence belongs to the peptidase C1 family.

In Tritrichomonas foetus (Trichomonas foetus), this protein is Cysteine proteinase.